Reading from the N-terminus, the 67-residue chain is Protein AaeX (67 aa).

2 helical membrane passes run 10-30 (FGLSFPPVFFVLMVSLTLFFV) and 43-63 (FVWHPALFNSALFCCLFYLLF).

The protein belongs to the AaeX family.

Its subcellular location is the cell membrane. This chain is Protein AaeX, found in Pectobacterium atrosepticum (strain SCRI 1043 / ATCC BAA-672) (Erwinia carotovora subsp. atroseptica).